The following is a 1002-amino-acid chain: Calmin (1002 aa).

Positions Met1–Glu288 are actin-binding. One can recognise a Calponin-homology (CH) 1 domain in the interval Asn32–Gln139. Positions Arg149–Ser168 are enriched in low complexity. The tract at residues Arg149–Ala180 is disordered. The Calponin-homology (CH) 2 domain occupies Arg187 to Pro291. Residues Ser301 and Ser402 each carry the phosphoserine modification. Disordered stretches follow at residues Gln389–Asn418, Asn500–Thr532, Asn581–Leu716, and Asp749–Ile911. A compositionally biased stretch (low complexity) spans Ser396–Ser409. Residues Asn500 to Asn509 are compositionally biased toward polar residues. The segment covering Ser585–Gly606 has biased composition (basic and acidic residues). The span at Lys607–Lys617 shows a compositional bias: basic residues. Basic and acidic residues-rich tracts occupy residues Asp618–Ser635 and Pro650–Glu659. The residue at position 619 (Ser619) is a Phosphoserine. Low complexity predominate over residues Gly681–Leu697. Thr699 carries the post-translational modification Phosphothreonine. Residues Ser713 and Ser769 each carry the phosphoserine modification. The span at Gly776 to Ser794 shows a compositional bias: low complexity. The segment covering Pro818–Asp834 has biased composition (basic and acidic residues). A compositionally biased stretch (polar residues) spans Ser835 to Asn846. Phosphoserine occurs at positions 838 and 841. A compositionally biased stretch (basic and acidic residues) spans Asn854–Lys863. A compositionally biased stretch (polar residues) spans Tyr898–Ser910. Position 907 is a phosphoserine (Ser907). Residues Met977–Leu997 traverse the membrane as a helical; Anchor for type IV membrane protein segment.

Widely expressed at intermediate level.

It localises to the membrane. This Homo sapiens (Human) protein is Calmin (CLMN).